The primary structure comprises 2204 residues: MEDGAQMRVVAFGDQTYDCSEAVSQLLRVRDDAIVVDFLERATAVLKAELARLSSEQQEETPRFATLAELVPRYRAGTLNPAVSQALTCITQLGLFIRQHSSGQEAYPTANDSCITGVCTGALTAVAVGSASSVTALVPLALHTVAVAVRLGARAWEIGSCLADARRGANGRYASWTSAVGGISPQDLQDRISAYMTEQALASVSVPYLSAAVGPGQSSVSAAPVILDAFLSTLLRPLTTTRLPITAPYHAPHLFTAKDVQHVTDCLPPSDAWPTVRIPIISFSRDEAVSRGASFPAAMSEAVRDCLIRPIALDRMAVSIANHARDLGKDSVLPSPIALSFSDKLGPQVNSHLPGTKAPTPELTSTSSIPSAIGAEQQPMAKSPIAILAASGRFPQSSSMDQFWDVLINGVDTHELVPPTRWNAATHVSEDPKAKNVSGTGFGCWLHEAGEFDAAYFNMSPREAPQVDPAQRLALLTATEVLEQAGIVPNRTSSTQKNRVGVWYGATSNDWMETNSAQNVDTYFIPGGNRAFIPGRVNYFHKFSGPSYTIDTACSSSLAALHMACNALWRGEVDTAIVGGTNVLTNPDMTAGLDAGHFLSRSGNCKTFDDEADGYCRGEAVVTLILKRLPDAQADKDPIQASILGIATNHSAEAASITRPHAGAQQDLFQQVLTETGLTANDISVCEMHGTGTQAGDSGETTSVVETLAPLNRSGSAVRTTPLYIGAVKSNVGHAESAAGVSSLAKILLMLKHSKIPPHVGIKTKLNHRLPDLAARNTHIARTEVPWPRPKNGKRRVLLNNFSAAGGNTCLVLEDAPEPEDSQEVDPREHHIVALSAKTPDSMVNNLTNMITWIDKHSGDSIATLPQLSYTTTARRVHHRHRAVATGTDLLQIRSSLQEQLDRRVSGERSIPHPPNGPSFVLAFTGQGSAFEGMGVDLYKRFASFRSDIARYDQICEGMSLPSIKAMFEDEKVFSTASPTLQQLTHVCFQMALYRLWKSLGVQAKAVVGHSLGEYAALYAAGVLSQSDTLYLVGRRAQLMEKHLSQGTHAMLAVRAKEEAIVAAIDGPPGEAYEFSCRNGEQRNVLGGTVAQIQAAKAALEAKKIRCQYLDTPMAFHTGQVDPILPELLQVAAACSIQDPQIPVISPAYGKVIRSAKDFQPEYFTHHCRSSVNMVDALQSAVEEGLLDKNIIGLEIGPGPVVTQFVKEAVGTTMQTFASINKDKDTWQLITQALAKFYLAGASIEWSRYHEDFPGAQKVLELPAYGWTLKNYWLQYVNDWSLRKGDPAVVVAASNLELSSSIHKVITNTITANSDGELVVDADLSREDLHPMVQGHQVYGVPLCTPSVYADIALTLGEYIRQVIKPGEVAQTSVEVAEMNIQSALVANNTGRVQLLRTYAKFDPKAQVASCTFSSIKEDGSSVVEQHANCKIRFGSLEKEKTALESAALAAQARMAALKTQVGQDDNTYRFSKGMIYKMIGQLADFDEKYRGLCAITLDNDAMEASGKVSFKGIPNEGKFHSSPAYLDALSQLGGFVMNANEGVDLEKEVFVNHGWGSMRFFAALDPAMTYYTHVKMTQGKDKLWTGDVLIFDDKQALIGIVGGVALQGVPKRLMHYIVTAANKKASGPPTEKKGSSPPVEKKASAPVAPTRPAIQRKNASIPPPATQVTPQNKTIKTPSVSALIAPALEIVSEEIGMPIDELKDDIDFTDAGLDSLLSLVISSRMRDQLGIEFESAQFMEIGSIGGLKEFLTRLSPPVAVAVATAVEIVKEEALTSLEELTDPSPNEIGTVWRDALKILSEESGLTDEELTDDTSFADVGVDSLMSLVITSRLRDELDIDFPDRALFEECQTIFDLRKRFSGSTESFDSTTTKPSAGDATPPLTDSSASSPPSSEFDGETPMTDLDEVFDSPPAQKRIPSPPKGRIPPAWSMYLQGSQKRSKEILFLFPDGAGAATSYLSLPRLGEDIGVVAFNSPFMKTPHKFVDHTLPDVIASYVEGIRGRQAQGPYHLGGWSAGGILAYAVAQELIAAGEEVSTLLLIDSPSPTKGLDRLPTRFFDHCTNVGLFGTELSRGSGGPNKTPEWLMPHFRASIELLHDYHAPPMKLGNKTKVMVIWAGECAFDGVRYAHIPPSAGDTDEDTEGMKFLTEKRKDFGATEWASLFPGTDVDARVVESEHHFSMMRDSGAQMLVEHMRDGLGIVSS.

The interval 11-250 (AFGDQTYDCS…TRLPITAPYH (240 aa)) is N-terminal acylcarrier protein transacylase domain (SAT). Residues 382 to 815 (KSPIAILAAS…GGNTCLVLED (434 aa)) enclose the Ketosynthase family 3 (KS3) domain. Residues C554, H689, and H734 each act as for beta-ketoacyl synthase activity in the active site. The segment at 923–1224 (AFTGQGSAFE…QTFASINKDK (302 aa)) is malonyl-CoA:ACP transacylase (MAT) domain. The segment at 1299-1619 (SSSIHKVITN…VPKRLMHYIV (321 aa)) is product template (PT) domain. An N-terminal hotdog fold region spans residues 1303 to 1439 (HKVITNTITA…CKIRFGSLEK (137 aa)). The PKS/mFAS DH domain occupies 1303 to 1616 (HKVITNTITA…LQGVPKRLMH (314 aa)). Catalysis depends on H1336, which acts as the Proton acceptor; for dehydratase activity. Positions 1468 to 1616 (TYRFSKGMIY…LQGVPKRLMH (149 aa)) are C-terminal hotdog fold. The Proton donor; for dehydratase activity role is filled by D1528. Residues 1625-1674 (KASGPPTEKKGSSPPVEKKASAPVAPTRPAIQRKNASIPPPATQVTPQNK) are disordered. Positions 1631 to 1644 (TEKKGSSPPVEKKA) are enriched in basic and acidic residues. Carrier domains follow at residues 1679 to 1756 (PSVS…TRLS) and 1783 to 1865 (DPSP…SGST). O-(pantetheine 4'-phosphoryl)serine is present on residues S1716 and S1824. A compositionally biased stretch (polar residues) spans 1864–1875 (STESFDSTTTKP). Residues 1864 to 1931 (STESFDSTTT…PPKGRIPPAW (68 aa)) are disordered. Residues 1880–1895 (ATPPLTDSSASSPPSS) are compositionally biased toward low complexity. Residues 1945–2195 (ILFLFPDGAG…SGAQMLVEHM (251 aa)) are thioesterase (TE) domain.

The cofactor is pantetheine 4'-phosphate.

The enzyme catalyses 6 malonyl-CoA + acetyl-CoA + 6 H(+) = nor-toralactone + 6 CO2 + 7 CoA + 2 H2O. It functions in the pathway mycotoxin biosynthesis. Functionally, polyketide synthase; part of the gene cluster that mediates the biosynthesis of cercosporin, a light-activated, non-host-selective toxin. The perylenequinone chromophore of cercosporin absorbs light energy to attain an electronically-activated triplet state and produces active oxygen species such as the hydroxyl radical, superoxide, hydrogen peroxide or singlet oxygen upon reaction with oxygen molecules. These reactive oxygen species cause damage to various cellular components including lipids, proteins and nucleic acids. The first step of cercosporin biosynthesis is performed by the polyketide synthase CTB1 which catalyzes the formation of nor-toralactone. The starter unit acyltransferase (SAT) domain of CTB1 initiates polyketide extension by the selective utilization of acetyl-CoA, which is elongated to the heptaketide in the beta-ketoacyl synthase (KS) domain by successive condensations with six malonyl units introduced by the malonyl acyltransferase (MAT) domain. The product template (PT) domain catalyzes C4-C9 and C2-C11 aldol cyclizations and dehydrations to a trihydroxynaphthalene, which is thought to be delivered to the thioesterase (TE) domain for product release. The bifunctional enzyme CTB3 then methylates nor-toralactone to toralactone before conducting an unusual oxidative aromatic ring opening. The O-methyltransferase CTB2 further methylates the nascent OH-6 of the CBT3 product, blocking further oxidation at this site before the reductase CTB6 reduces the 2-oxopropyl ketone at position C7, giving naphthalene. The FAD-dependent monooxygenase CTB5 in concert with the multicopper oxidase CTB12 are responsible for homodimerization of naphthalene with CTB7 installing the dioxepine moiety, finally producing cercosporin. The fasciclin domain-containing protein CTB11 might act with CTB5 and CTB12 whereas the roles of CTB9 and CTB10 have still to be elucidated. The polypeptide is Non-reducing polyketide synthase CTB1 (Cercospora beticola (Sugarbeet leaf spot fungus)).